The chain runs to 774 residues: Cleavage and polyadenylation specificity factor subunit 3 (774 aa).

The span at 1-26 shows a compositional bias: basic residues; it reads MHHNNHHHGHHGRYQHHHNQHLKRPL. A disordered region spans residues 1–30; it reads MHHNNHHHGHHGRYQHHHNQHLKRPLKGGT. The Zn(2+) site is built by H97, H99, D101, H102, H185, and D206. The active-site Proton donor is H423. A Zn(2+)-binding site is contributed by H445. A disordered region spans residues 636-665; sequence KEEITKDDIEKEKEKEKEQQDGDDDDDDEI. The span at 638–655 shows a compositional bias: basic and acidic residues; it reads EITKDDIEKEKEKEKEQQ.

This sequence belongs to the metallo-beta-lactamase superfamily. RNA-metabolizing metallo-beta-lactamase-like family. CPSF3 subfamily. Component of the cleavage and polyadenylation specificity factor (CPSF) complex. Zn(2+) is required as a cofactor.

The protein resides in the nucleus. Its function is as follows. Component of the cleavage and polyadenylation specificity factor (CPSF) complex that play a key role in pre-mRNA 3'-end formation, recognizing the AAUAAA signal sequence and interacting with poly(A) polymerase and other factors to bring about cleavage and poly(A) addition. Has endonuclease activity, and functions as an mRNA 3'-end-processing endonuclease. The sequence is that of Cleavage and polyadenylation specificity factor subunit 3 (cpsf3) from Dictyostelium discoideum (Social amoeba).